Reading from the N-terminus, the 292-residue chain is 33 kDa chaperonin (292 aa).

Disulfide bonds link Cys-238-Cys-240 and Cys-271-Cys-274.

The protein belongs to the HSP33 family. Under oxidizing conditions two disulfide bonds are formed involving the reactive cysteines. Under reducing conditions zinc is bound to the reactive cysteines and the protein is inactive.

It localises to the cytoplasm. Redox regulated molecular chaperone. Protects both thermally unfolding and oxidatively damaged proteins from irreversible aggregation. Plays an important role in the bacterial defense system toward oxidative stress. This is 33 kDa chaperonin from Latilactobacillus sakei subsp. sakei (strain 23K) (Lactobacillus sakei subsp. sakei).